The primary structure comprises 248 residues: Exosome complex component Rrp41 (248 aa).

This sequence belongs to the RNase PH family. Rrp41 subfamily. As to quaternary structure, component of the archaeal exosome complex. Forms a hexameric ring-like arrangement composed of 3 Rrp41-Rrp42 heterodimers. The hexameric ring associates with a trimer of Rrp4 and/or Csl4 subunits.

The protein localises to the cytoplasm. Its function is as follows. Catalytic component of the exosome, which is a complex involved in RNA degradation. Has 3'-&gt;5' exoribonuclease activity. Can also synthesize heteromeric RNA-tails. Binds RNA. This is Exosome complex component Rrp41 from Saccharolobus solfataricus (strain ATCC 35092 / DSM 1617 / JCM 11322 / P2) (Sulfolobus solfataricus).